The primary structure comprises 36 residues: Photosystem I reaction center subunit VIII (36 aa).

The helical transmembrane segment at 8 to 28 (SILVPLVGLVFPAIAMASLFL) threads the bilayer.

Belongs to the PsaI family.

It is found in the plastid. The protein resides in the chloroplast thylakoid membrane. In terms of biological role, may help in the organization of the PsaL subunit. This chain is Photosystem I reaction center subunit VIII, found in Vitis vinifera (Grape).